The chain runs to 564 residues: Kelch repeat and BTB domain-containing protein 1 (564 aa).

Residues 21–88 (CDINIVINDE…IYGIPLSLTN (68 aa)) form the BTB domain. Residues 123 to 219 (CIDFYIYADK…SLLSPQVIKS (97 aa)) enclose the BACK domain. Kelch repeat units follow at residues 252–297 (IELI…VLDN), 298–346 (IIYM…ADDE), 347–395 (YIYC…MLNG), 397–441 (IYVI…VHDG), and 442–492 (KIYI…STHN).

Interacts (via BTB domain) with host CUL3.

Its subcellular location is the host cytoplasm. Its function is as follows. Probable substrate-specific adapter of CUL3-containing E3 ubiquitin-protein ligases which mediate the ubiquitination and subsequent proteasomal degradation of host target proteins. In Bos taurus (Bovine), this protein is Kelch repeat and BTB domain-containing protein 1 (KBTB1).